Reading from the N-terminus, the 422-residue chain is Zinc finger protein Gfi-1 (422 aa).

The segment at 1-20 (MPRSFLVKSKKAHSYHQPRS) is SNAG domain. The disordered stretch occupies residues 1–109 (MPRSFLVKSK…ASEKSMCPSL (109 aa)). S20 and S56 each carry phosphoserine. Positions 140–257 (RPCGALERGA…LLLGGGSYKC (118 aa)) are required for interaction with RELA. 6 C2H2-type zinc fingers span residues 255 to 278 (YKCI…RRSH), 284 to 306 (FACE…KAVH), 312 to 334 (FDCK…LLIH), 340 to 362 (YPCQ…TFIH), 368 to 390 (HKCQ…SRKH), and 396 to 419 (FGCD…ETQH).

In terms of assembly, interacts with U2AF1L4. Component of RCOR-GFI-KDM1A-HDAC complexes. Interacts directly with RCOR1, KDM1A and HDAC2. Also interacts with HDAC1. Interacts (via the zinc-finger domain) with ARIH2; the interaction prevents GFI1 ubiquitination and proteasomal degradation. Interacts with PIAS3; the interaction relieves the inhibitory effect of PIAS3 on STAT3-mediated transcriptional activity. Forms a complex with EHMT2 and HDAC1 to promote 'Lys-9' dimethylation of H3 (H3K9Me2) and repress expression of target genes. Interacts directly with EHMT2. Component of the GFI1-AJUBA-HDAC1 repressor complex. Interacts directly with AJUBA (via ITS LIM domains); the interaction results in the HDAC-dependent corepression of a subset of GFI1 target genes and, occurs independently of the SNAG domain. Interacts with SPI1; the interaction inhibits SPI1 transcriptional activity targeted at macrophage-specific genes, repressing macrophage differentiation of myeloid progenitor cells and promoting granulocyte commitment. Interacts with RUNX1T1; the interaction represses HDAC-mediated transcriptional activity. Interacts with RELA; the interaction occurs on liposaccharide (LPS) stimulation and controls RELA DNA binding activity and regulates endotoxin-mediated TOLL-like receptor inflammatory response. Interacts (via the C-terminal zinc fingers) with ZBTB17; the interaction results in the recruitment of GFI1 to the CDKN1A/p21 and CDKN1B promoters and repression of transcription. Post-translationally, ubiquitinated. Ubiquitination and degradation by the proteasome is inhibited by the ubiquitin ligase, ARIH2.

It is found in the nucleus. In terms of biological role, transcription repressor essential for hematopoiesis. Functions in a cell-context and development-specific manner. Binds to 5'-TAAATCAC[AT]GCA-3' in the promoter region of a large number of genes. Component of several complexes, including the EHMT2-GFI1-HDAC1, AJUBA-GFI1-HDAC1 and RCOR-GFI-KDM1A-HDAC complexes, that suppress, via histone deacetylase (HDAC) recruitment, a number of genes implicated in multilineage blood cell development. Regulates neutrophil differentiation, promotes proliferation of lymphoid cells, and is required for granulocyte development. Inhibits SPI1 transcriptional activity at macrophage-specific genes, repressing macrophage differentiation of myeloid progenitor cells and promoting granulocyte commitment. Mediates, together with U2AF1L4, the alternative splicing of CD45 and controls T-cell receptor signaling. Regulates the endotoxin-mediated Toll-like receptor (TLR) inflammatory response by antagonizing RELA. Cooperates with CBFA2T2 to regulate ITGB1-dependent neurite growth. Controls cell-cycle progression by repressing CDKNIA/p21 transcription in response to TGFB1 via recruitment of GFI1 by ZBTB17 to the CDKNIA/p21 and CDKNIB promoters. Required for the maintenance of inner ear hair cells. In addition to its role in transcription, acts as a substrate adapter for PRMT1 in the DNA damage response: facilitates the recognition of TP53BP1 and MRE11 substrates by PRMT1, promoting their methylation and the DNA damage response. In Homo sapiens (Human), this protein is Zinc finger protein Gfi-1 (GFI1).